Here is a 344-residue protein sequence, read N- to C-terminus: Biotin synthase (344 aa).

Residues 40–267 enclose the Radical SAM core domain; that stretch reads AEVQVSTLLS…KSMVRLSAGR (228 aa). [4Fe-4S] cluster-binding residues include C55, C59, and C62. Residues C99, C130, C190, and R262 each coordinate [2Fe-2S] cluster.

It belongs to the radical SAM superfamily. Biotin synthase family. Homodimer. [4Fe-4S] cluster is required as a cofactor. The cofactor is [2Fe-2S] cluster.

The enzyme catalyses (4R,5S)-dethiobiotin + (sulfur carrier)-SH + 2 reduced [2Fe-2S]-[ferredoxin] + 2 S-adenosyl-L-methionine = (sulfur carrier)-H + biotin + 2 5'-deoxyadenosine + 2 L-methionine + 2 oxidized [2Fe-2S]-[ferredoxin]. It functions in the pathway cofactor biosynthesis; biotin biosynthesis; biotin from 7,8-diaminononanoate: step 2/2. Catalyzes the conversion of dethiobiotin (DTB) to biotin by the insertion of a sulfur atom into dethiobiotin via a radical-based mechanism. In Xanthomonas oryzae pv. oryzae (strain PXO99A), this protein is Biotin synthase.